The following is an 868-amino-acid chain: mRNA-capping enzyme (868 aa).

Lysine 282 serves as the catalytic N6-GMP-lysine intermediate. Residues 594–868 enclose the mRNA cap 0 methyltransferase domain; sequence GIYRAQTALI…LFGFICLRKN (275 aa). S-adenosyl-L-methionine-binding positions include lysine 607, glycine 624, aspartate 646, and 710 to 712; that span reads LFI.

It in the N-terminal section; belongs to the dsDNA virus mRNA guanylyltransferase family. In the C-terminal section; belongs to the class I-like SAM-binding methyltransferase superfamily. mRNA cap 0 methyltransferase family. In terms of assembly, part of the viral DNA-directed RNA polymerase that consists of 8 polII-like subunits (RPB1, RPB2, RPB3, RPB5, RPB6, RPB7, RPB9, RPB10), a capping enzyme and a termination factor.

The protein resides in the virion. The enzyme catalyses a 5'-end triphospho-ribonucleoside in mRNA + H2O = a 5'-end diphospho-ribonucleoside in mRNA + phosphate + H(+). The catalysed reaction is a 5'-end diphospho-ribonucleoside in mRNA + GTP + H(+) = a 5'-end (5'-triphosphoguanosine)-ribonucleoside in mRNA + diphosphate. It carries out the reaction a 5'-end (5'-triphosphoguanosine)-ribonucleoside in mRNA + S-adenosyl-L-methionine = a 5'-end (N(7)-methyl 5'-triphosphoguanosine)-ribonucleoside in mRNA + S-adenosyl-L-homocysteine. Its pathway is mRNA processing; mRNA capping. Probably catalyzes the second reaction in the mRNA cap formation pathway. Forms a covalent complex with GTP. This chain is mRNA-capping enzyme, found in African swine fever virus (isolate Tick/South Africa/Pretoriuskop Pr4/1996) (ASFV).